The primary structure comprises 506 residues: MMDFVLLEKALLGLFIATIVAITISKLRGKKLKLPPGPIPVPVFGNWLQVGDDLNQRNLVDYAKKFGDLFMLRMGQRNLVVVSSPELAKDVLHTQGVEFGSRTRNVVFDIFTGKGQDMVFTVYSEHWRKMRRIMTVPFFTNKVVQQYRFGWEDEAARVVEDVKANPEAATNGIVLRNRLQLLMYNNMYRIMFDRRFESVDDPLFLKLKALNGERSRLAQSFEYHFGDFIPILRPFLRGYLKLCQEIKDKRLKLFKDYFVDERKKLESIKSVDNNSLKCAIDHIIEAQQKGEINEDNVLYIVENINVAAIETTLWSIEWGIAELVNNPEIQKKLRHELDTVLGAGVQICEPDVQKLPYLQAVIKETLRYRMAIPLLVPHMNLHDAKLAGYDIPAESKILVNAWWLANNPAHWNKPDEFRPERFLEEESKVEANGNDFKYIPFGVGRRSCPGIILALPILGIVIGRLVQNFELLPPPGQSKIDTAEKGGQFSLQILKHSTIVCKPRSL.

A helical membrane pass occupies residues 3 to 23 (DFVLLEKALLGLFIATIVAIT). (E)-cinnamate contacts are provided by residues 214–219 (RSRLAQ) and Ala307. Cys448 lines the heme pocket.

It belongs to the cytochrome P450 family. Requires heme as cofactor.

Its subcellular location is the membrane. The catalysed reaction is (E)-cinnamate + reduced [NADPH--hemoprotein reductase] + O2 = (E)-4-coumarate + oxidized [NADPH--hemoprotein reductase] + H2O + H(+). It participates in phenylpropanoid metabolism; trans-4-coumarate biosynthesis; trans-4-coumarate from trans-cinnamate: step 1/1. Functionally, catalyzes the first oxidative step of the phenylpropanoid pathway in higher plants by transforming trans-cinnamate into p-coumarate. The compounds formed by this pathway are essential components for lignification, pollination, and defense against ultraviolet light, predators and pathogens. The polypeptide is Trans-cinnamate 4-monooxygenase (CYP73A10) (Petroselinum crispum (Parsley)).